We begin with the raw amino-acid sequence, 512 residues long: NAD(P)H-quinone oxidoreductase chain 4, chloroplastic (512 aa).

14 helical membrane-spanning segments follow: residues 4–24 (LPWL…IPFI), 34–54 (WYAL…FGYH), 87–107 (MPLV…AWPV), 111–131 (AKLF…VFVS), 134–154 (LLLF…LLLV), 167–187 (FILY…TMAF), 210–230 (ILLY…FPLH), 241–261 (HYST…YALI), 273–293 (LIFA…AALT), 312–332 (MGFV…GAVL), 333–353 (QMIS…TTYD), 373–395 (TFAM…GFVA), 416–436 (IITF…LSML), and 462–482 (IFVI…PKMA).

It belongs to the complex I subunit 4 family.

It is found in the plastid. Its subcellular location is the chloroplast thylakoid membrane. The catalysed reaction is a plastoquinone + NADH + (n+1) H(+)(in) = a plastoquinol + NAD(+) + n H(+)(out). The enzyme catalyses a plastoquinone + NADPH + (n+1) H(+)(in) = a plastoquinol + NADP(+) + n H(+)(out). This is NAD(P)H-quinone oxidoreductase chain 4, chloroplastic from Chlorokybus atmophyticus (Soil alga).